Consider the following 253-residue polypeptide: Sulfate transporter CysZ (253 aa).

The next 4 helical transmembrane spans lie at 31-51 (FVILPLLVNILLMGGAFWWLF), 75-95 (LLWPLAVISVLLVFGYFFSTI), 151-171 (IVLLILYFIPGIGQTVAPVLW), and 222-242 (IPLLNLFIMPVAVCGATAMWV).

This sequence belongs to the CysZ family.

Its subcellular location is the cell inner membrane. In terms of biological role, high affinity, high specificity proton-dependent sulfate transporter, which mediates sulfate uptake. Provides the sulfur source for the cysteine synthesis pathway. The sequence is that of Sulfate transporter CysZ from Escherichia coli O7:K1 (strain IAI39 / ExPEC).